The following is a 520-amino-acid chain: Succinyl-CoA:3-ketoacid coenzyme A transferase 2A, mitochondrial (520 aa).

The N-terminal 39 residues, 1 to 39 (MAALRLLAWAFSRRVSAHRPQPTLPHHLIRHYPTTRCGK), are a transit peptide targeting the mitochondrion. The disordered stretch occupies residues 280 to 299 (ERLTTRDSPPAPGSKDQDPK). Residue E342 is the 5-glutamyl coenzyme A thioester intermediate of the active site.

It belongs to the 3-oxoacid CoA-transferase family. As to quaternary structure, homodimer. As to expression, expressed in flagella of epididymal sperm.

The protein localises to the mitochondrion. It catalyses the reaction a 3-oxo acid + succinyl-CoA = a 3-oxoacyl-CoA + succinate. The protein operates within ketone metabolism; succinyl-CoA degradation; acetoacetyl-CoA from succinyl-CoA: step 1/1. Its function is as follows. Key enzyme for ketone body catabolism. Transfers the CoA moiety from succinate to acetoacetate. Formation of the enzyme-CoA intermediate proceeds via an unstable anhydride species formed between the carboxylate groups of the enzyme and substrate. Probably play and important roles in the energy metabolism of spermatozoa. The protein is Succinyl-CoA:3-ketoacid coenzyme A transferase 2A, mitochondrial (Oxct2a) of Rattus norvegicus (Rat).